The chain runs to 76 residues: CLAVATA3/ESR (CLE)-related protein 46 (76 aa).

Positions 1–26 (MRRHDIIIKLLLLMCLLLSRFVTREC) are cleaved as a signal peptide. Positions 53–76 (EEKKWHKHPSGPNPTGNRHPPVKH) are disordered. Residues Pro-61 and Pro-64 each carry the hydroxyproline modification. Pro-64 is a glycosylation site (O-linked (Ara...) hydroxyproline).

This sequence belongs to the CLV3/ESR signal peptide family. The O-glycosylation (arabinosylation) of the hydroxyproline Pro-64 enhances binding affinity of the CLE46p peptide for its receptor.

It is found in the secreted. The protein localises to the extracellular space. Functionally, extracellular signal peptide that regulates cell fate. The sequence is that of CLAVATA3/ESR (CLE)-related protein 46 from Arabidopsis thaliana (Mouse-ear cress).